Reading from the N-terminus, the 174-residue chain is Eukaryotic translation elongation factor 1 epsilon-1 (174 aa).

Position 2 is an N-acetylalanine (Ala2). Positions Ala2–Ser56 are N-terminal. One can recognise a GST C-terminal domain in the interval His50 to Ser173. The segment at Lys57–Ser63 is linker. A C-terminal region spans residues Thr64–Tyr152. Lys138 is modified (N6-acetyllysine). Positions Pro153–Leu169 form a coiled coil.

As to quaternary structure, part of a multisubunit complex that groups tRNA ligases for Arg (RARS1), Asp (DARS1), Gln (QARS1), Ile (IARS1), Leu (LARS1), Lys (KARS1), Met (MARS1) the bifunctional ligase for Glu and Pro (EPRS1) and the auxiliary subunits AIMP1/p43, AIMP2/p38 and EEF1E1/p18. Can interact simultaneously with MARS1 and EPRS1. Forms a linear complex that contains MARS1, EEF1E1, EPRS1 and AIMP2 that is at the core of the multisubunit complex. Interacts with ATM and ATR. The interaction with ATM, which takes place independently of TP53, is induced by DNA damage that may occur during genotoxic stress or cell growth. The interaction with ATR is enhanced by UV irradiation.

Its subcellular location is the cytoplasm. It is found in the nucleus. Functionally, positive modulator of ATM response to DNA damage. This chain is Eukaryotic translation elongation factor 1 epsilon-1 (Eef1e1), found in Mus musculus (Mouse).